The chain runs to 1535 residues: ABC multidrug transporter atrF (1535 aa).

A disordered region spans residues 1-115 (MADDHRQPEA…DEQASSTDEY (115 aa)). Residue Asn-33 is glycosylated (N-linked (GlcNAc...) asparagine). Positions 34-45 (TTSTSETDASAD) are enriched in low complexity. Basic and acidic residues predominate over residues 46–76 (ADARWGERNQGDPVSRRGAMEEFEEMRREVT). Positions 79 to 93 (SLHRTRSAKDARRRS) are enriched in basic residues. N-linked (GlcNAc...) asparagine glycans are attached at residues Asn-149, Asn-274, Asn-287, and Asn-351. An ABC transporter 1 domain is found at 185–427 (VPALHFGKRP…FVDLGFYCPE (243 aa)). The next 7 helical transmembrane spans lie at 540–560 (LYTK…LFYG), 573–593 (GALF…MPAV), 618–638 (VVVD…IVYF), 646–666 (ASKF…ITSL), 680–700 (AVRF…YVIP), 703–723 (GLID…LSYS), and 791–811 (FGVV…AAEV). Positions 834–868 (KAQNGKGNDEEQVQNTGDNAALSRGEAKSSSSGEA) are disordered. Residues 879 to 1117 (FTWSNVEYTV…DVIKYFADRG (239 aa)) enclose the ABC transporter 2 domain. An N-linked (GlcNAc...) asparagine glycan is attached at Asn-892. An ATP-binding site is contributed by 915–922 (GASGAGKT). The next 6 membrane-spanning stretches (helical) occupy residues 1212 to 1232 (YGKL…FWML), 1246 to 1266 (IFLI…KFYI), 1295 to 1315 (IPMA…PVGF), 1320 to 1340 (SSAG…ASWG), 1342 to 1362 (WICA…FFFV), and 1384 to 1406 (WMYY…FPSV). N-linked (GlcNAc...) asparagine glycosylation occurs at Asn-1459. 2 consecutive transmembrane segments (helical) span residues 1477–1497 (CFGI…FFIY) and 1503–1523 (GWSF…EGVK).

The protein belongs to the ABC transporter superfamily. ABCG family. PDR (TC 3.A.1.205) subfamily.

It localises to the cell membrane. The catalysed reaction is voriconazole(in) + ATP + H2O = voriconazole(out) + ADP + phosphate + H(+). Functionally, pleiotropic ABC efflux transporter involved in the basal level of azole susceptibility. Confers resistance to voriconazole. In Aspergillus flavus (strain ATCC 200026 / FGSC A1120 / IAM 13836 / NRRL 3357 / JCM 12722 / SRRC 167), this protein is ABC multidrug transporter atrF.